We begin with the raw amino-acid sequence, 1044 residues long: Ribonucleoside-diphosphate reductase subunit alpha (1044 aa).

ATP-cone domains follow at residues 9-111 (YTIV…KAER), 118-217 (IAII…ARAR), and 235-325 (YVVQ…ETLG). Residues threonine 440, 455 to 456 (SC), glycine 484, 668 to 672 (NLCTE), and 855 to 859 (PTATI) each bind substrate. A disulfide bridge connects residues cysteine 456 and cysteine 685. Asparagine 668 functions as the Proton acceptor in the catalytic mechanism. Catalysis depends on cysteine 670, which acts as the Cysteine radical intermediate. Glutamate 672 (proton acceptor) is an active-site residue.

It belongs to the ribonucleoside diphosphate reductase large chain family. In terms of assembly, tetramer of two alpha and two beta subunits.

It catalyses the reaction a 2'-deoxyribonucleoside 5'-diphosphate + [thioredoxin]-disulfide + H2O = a ribonucleoside 5'-diphosphate + [thioredoxin]-dithiol. Under complex allosteric control mediated by deoxynucleoside triphosphates and ATP binding. The type of nucleotide bound at the specificity site determines substrate preference. It seems probable that ATP makes the enzyme reduce CDP and UDP, dGTP favors ADP reduction and dTTP favors GDP reduction. Its function is as follows. Provides the precursors necessary for DNA synthesis. Catalyzes the biosynthesis of deoxyribonucleotides from the corresponding ribonucleotides. The sequence is that of Ribonucleoside-diphosphate reductase subunit alpha (nrdA) from Chlamydia pneumoniae (Chlamydophila pneumoniae).